A 190-amino-acid polypeptide reads, in one-letter code: Elongation factor P 2 (190 aa).

The protein belongs to the elongation factor P family.

The protein resides in the cytoplasm. It participates in protein biosynthesis; polypeptide chain elongation. In terms of biological role, involved in peptide bond synthesis. Stimulates efficient translation and peptide-bond synthesis on native or reconstituted 70S ribosomes in vitro. Probably functions indirectly by altering the affinity of the ribosome for aminoacyl-tRNA, thus increasing their reactivity as acceptors for peptidyl transferase. This Protochlamydia amoebophila (strain UWE25) protein is Elongation factor P 2 (efp2).